Reading from the N-terminus, the 410-residue chain is 3-phenylpropionate/cinnamic acid dioxygenase ferredoxin--NAD(+) reductase component (410 aa).

5–36 (TIIIVGGGQAAAMAAASLRQQGFTGELHLFSD) is a binding site for FAD. NAD(+) is bound at residue 146 to 184 (SVVIVGAGTIGLELAASATQRSAAQRSAAQRRCKVTVIE).

This sequence belongs to the bacterial ring-hydroxylating dioxygenase ferredoxin reductase family. This dioxygenase system consists of four proteins: the two subunits of the hydroxylase component (HcaE and HcaF), a ferredoxin (HcaC) and a ferredoxin reductase (HcaD). Requires FAD as cofactor.

It carries out the reaction 2 reduced [2Fe-2S]-[ferredoxin] + NAD(+) + H(+) = 2 oxidized [2Fe-2S]-[ferredoxin] + NADH. It functions in the pathway aromatic compound metabolism; 3-phenylpropanoate degradation. Its function is as follows. Part of the multicomponent 3-phenylpropionate dioxygenase, that converts 3-phenylpropionic acid (PP) and cinnamic acid (CI) into 3-phenylpropionate-dihydrodiol (PP-dihydrodiol) and cinnamic acid-dihydrodiol (CI-dihydrodiol), respectively. The protein is 3-phenylpropionate/cinnamic acid dioxygenase ferredoxin--NAD(+) reductase component of Shigella flexneri serotype 5b (strain 8401).